We begin with the raw amino-acid sequence, 316 residues long: 4-hydroxy-3-methylbut-2-enyl diphosphate reductase (316 aa).

Cysteine 12 contacts [4Fe-4S] cluster. Residues histidine 41 and histidine 74 each contribute to the (2E)-4-hydroxy-3-methylbut-2-enyl diphosphate site. Histidine 41 and histidine 74 together coordinate dimethylallyl diphosphate. Isopentenyl diphosphate contacts are provided by histidine 41 and histidine 74. Residue cysteine 96 coordinates [4Fe-4S] cluster. Histidine 124 contributes to the (2E)-4-hydroxy-3-methylbut-2-enyl diphosphate binding site. Position 124 (histidine 124) interacts with dimethylallyl diphosphate. Histidine 124 serves as a coordination point for isopentenyl diphosphate. Glutamate 126 functions as the Proton donor in the catalytic mechanism. Residue threonine 168 coordinates (2E)-4-hydroxy-3-methylbut-2-enyl diphosphate. Residue cysteine 198 coordinates [4Fe-4S] cluster. Serine 226, serine 227, asparagine 228, and serine 270 together coordinate (2E)-4-hydroxy-3-methylbut-2-enyl diphosphate. 4 residues coordinate dimethylallyl diphosphate: serine 226, serine 227, asparagine 228, and serine 270. Positions 226, 227, 228, and 270 each coordinate isopentenyl diphosphate.

Belongs to the IspH family. It depends on [4Fe-4S] cluster as a cofactor.

The catalysed reaction is isopentenyl diphosphate + 2 oxidized [2Fe-2S]-[ferredoxin] + H2O = (2E)-4-hydroxy-3-methylbut-2-enyl diphosphate + 2 reduced [2Fe-2S]-[ferredoxin] + 2 H(+). It catalyses the reaction dimethylallyl diphosphate + 2 oxidized [2Fe-2S]-[ferredoxin] + H2O = (2E)-4-hydroxy-3-methylbut-2-enyl diphosphate + 2 reduced [2Fe-2S]-[ferredoxin] + 2 H(+). It participates in isoprenoid biosynthesis; dimethylallyl diphosphate biosynthesis; dimethylallyl diphosphate from (2E)-4-hydroxy-3-methylbutenyl diphosphate: step 1/1. Its pathway is isoprenoid biosynthesis; isopentenyl diphosphate biosynthesis via DXP pathway; isopentenyl diphosphate from 1-deoxy-D-xylulose 5-phosphate: step 6/6. Its function is as follows. Catalyzes the conversion of 1-hydroxy-2-methyl-2-(E)-butenyl 4-diphosphate (HMBPP) into a mixture of isopentenyl diphosphate (IPP) and dimethylallyl diphosphate (DMAPP). Acts in the terminal step of the DOXP/MEP pathway for isoprenoid precursor biosynthesis. The protein is 4-hydroxy-3-methylbut-2-enyl diphosphate reductase of Acinetobacter baumannii (strain AB307-0294).